The chain runs to 81 residues: Beta-catenin-interacting protein 1 (81 aa).

Serine 59 bears the Phosphoserine mark.

Belongs to the CTNNBIP1 family. In terms of assembly, binds CTNNB1. Highly expressed in heart, brain, liver and skeletal muscle. Detected at low levels in kidney, testis and lung.

The protein localises to the cytoplasm. It localises to the nucleus. Its function is as follows. Prevents the interaction between CTNNB1 and TCF family members, and acts as a negative regulator of the Wnt signaling pathway. This Mus musculus (Mouse) protein is Beta-catenin-interacting protein 1 (Ctnnbip1).